The primary structure comprises 207 residues: MPKVQILNQQGENVGELELNEAIFGVDVNEHVVYEVVKNQLANKRQGTQSAKTRSEVRGGGRKPWRQKGTGRARQGSIRSPQWRGGGVVFAPKPRDYSYAVPKKVRRLAIKSVLTEKVNDNEMIVLDKLNLDAISTKKAVEVLKNIKADKKALVVIDKNDDTLYRSFRNIENVAICEAKLINVYDCLKYNSLVITTDAVKILEEVFQ.

Positions 44–81 are disordered; sequence KRQGTQSAKTRSEVRGGGRKPWRQKGTGRARQGSIRSP. Positions 60–71 are enriched in basic residues; the sequence is GGRKPWRQKGTG.

It belongs to the universal ribosomal protein uL4 family. Part of the 50S ribosomal subunit.

One of the primary rRNA binding proteins, this protein initially binds near the 5'-end of the 23S rRNA. It is important during the early stages of 50S assembly. It makes multiple contacts with different domains of the 23S rRNA in the assembled 50S subunit and ribosome. Its function is as follows. Forms part of the polypeptide exit tunnel. This Finegoldia magna (strain ATCC 29328 / DSM 20472 / WAL 2508) (Peptostreptococcus magnus) protein is Large ribosomal subunit protein uL4.